Consider the following 438-residue polypeptide: sn-glycerol-3-phosphate-binding periplasmic protein UgpB (438 aa).

An N-terminal signal peptide occupies residues 1–23 (MISLRHTALGLALSLAFTGQALA). Sn-glycerol 3-phosphate-binding residues include Tyr-65, Glu-89, Ser-144, Ser-270, Gly-307, Tyr-346, and Arg-397.

The protein belongs to the bacterial solute-binding protein 1 family. In terms of assembly, the complex is composed of two ATP-binding proteins (UgpC), two transmembrane proteins (UgpA and UgpE) and a solute-binding protein (UgpB).

The protein resides in the periplasm. Its function is as follows. Part of the ABC transporter complex UgpBAEC involved in sn-glycerol-3-phosphate (G3P) import. Binds G3P. The protein is sn-glycerol-3-phosphate-binding periplasmic protein UgpB (ugpB) of Salmonella typhi.